The following is a 94-amino-acid chain: Putative pterin-4-alpha-carbinolamine dehydratase (94 aa).

Belongs to the pterin-4-alpha-carbinolamine dehydratase family.

The enzyme catalyses (4aS,6R)-4a-hydroxy-L-erythro-5,6,7,8-tetrahydrobiopterin = (6R)-L-erythro-6,7-dihydrobiopterin + H2O. The chain is Putative pterin-4-alpha-carbinolamine dehydratase from Mycobacterium avium (strain 104).